Consider the following 257-residue polypeptide: Type III pantothenate kinase (257 aa).

Residue 5 to 12 participates in ATP binding; that stretch reads DIGNTNIK. Substrate is bound at residue 107–110; that stretch reads GSDR. D109 serves as the catalytic Proton acceptor. T133 contributes to the ATP binding site.

It belongs to the type III pantothenate kinase family. Homodimer. The cofactor is NH4(+). It depends on K(+) as a cofactor.

The protein localises to the cytoplasm. It carries out the reaction (R)-pantothenate + ATP = (R)-4'-phosphopantothenate + ADP + H(+). Its pathway is cofactor biosynthesis; coenzyme A biosynthesis; CoA from (R)-pantothenate: step 1/5. Its function is as follows. Catalyzes the phosphorylation of pantothenate (Pan), the first step in CoA biosynthesis. This chain is Type III pantothenate kinase, found in Ehrlichia ruminantium (strain Gardel).